The chain runs to 329 residues: Cuticle collagen 6 (329 aa).

5 triple-helical region regions span residues 142-171 (GAAGPPGPEGPPGNDGKDGRNGNDGKNGRD), 189-212 (GAPGPMGAMGPKGPPGPKGSPGEP), 216-248 (GKSGDDGMAGQPGPIGRPGRDGMKGAPGAAGRL), 253-279 (GPQGAPGKPGPIGPPGPKGNPGPDGQS), and 282-320 (GPPGPPGDSGTPGHEGRAGPNGPAGPPGDNGEKGDCGHC). A disordered region spans residues 146–329 (PPGPEGPPGN…CPPPRTPPGY (184 aa)). A compositionally biased stretch (basic and acidic residues) spans 156-173 (DGKDGRNGNDGKNGRDAE). The segment covering 187–199 (PTGAPGPMGAMGP) has biased composition (low complexity). The span at 200–212 (KGPPGPKGSPGEP) shows a compositional bias: pro residues. A compositionally biased stretch (pro residues) spans 251–272 (VPGPQGAPGKPGPIGPPGPKGN). Residues 273–282 (PGPDGQSYQG) are compositionally biased toward low complexity. The span at 320 to 329 (CPPPRTPPGY) shows a compositional bias: pro residues.

It belongs to the cuticular collagen family. As to quaternary structure, collagen polypeptide chains are complexed within the cuticle by disulfide bonds and other types of covalent cross-links.

Its function is as follows. Nematode cuticles are composed largely of collagen-like proteins. The cuticle functions both as an exoskeleton and as a barrier to protect the worm from its environment. The sequence is that of Cuticle collagen 6 from Caenorhabditis elegans.